The primary structure comprises 493 residues: MAVFGVTIALLVWVATLLIVSIWKQIYSSWNLPPGPFPLPILGNIFQLDLKNIPKSLTKLAERFGPVFTLHLGSKRIVVLHGYKAVKEVLLNHKNEFSGRGDIPVFQEYMNKGIIFNNGPTWKDVRRFSLSILRDYGMGKQGNEARIQREAHFLMEELKKTNGQPFDPTFLVGCAPFNVISDILFHKRFDYNDKTCLRLMSLFNENFYLLSTPWIQAYNNFENYLRYLPGSHRKIMKNASEIRQYTLAKAKEHLQSLDSSCPRDVTDCLLIEMEKEKDSQEPMYTMENISVTLADLFFAGTETTSTTLRYGLLILMKYPEVEEKLHEEIDRVIGPSRVPVFKDRLEMPYMDAVVHEIQRFISLIPSNLPHEATRDTMFRGYVIPKGTVVIPTLDSLLYDSQEFPDPEKFKPEHFLNENGKFKYSDHFKAFSAGKRVCVGEGLARMELFLLLTAILQHFNLKSLVDPKDIDLNPVTIGFGCVPPEFKLCVIPRS.

Residue 298-303 participates in substrate binding; sequence FAGTET. Cysteine 437 lines the heme pocket.

It belongs to the cytochrome P450 family. Interacts with chaperones HSP70 and HSP90; this interaction is required for initial targeting to mitochondria. Heme serves as cofactor.

It is found in the endoplasmic reticulum membrane. The protein localises to the microsome membrane. It localises to the mitochondrion inner membrane. It catalyses the reaction an organic molecule + reduced [NADPH--hemoprotein reductase] + O2 = an alcohol + oxidized [NADPH--hemoprotein reductase] + H2O + H(+). It carries out the reaction (5Z,8Z,11Z)-eicosatrienoate + reduced [NADPH--hemoprotein reductase] + O2 = 19-hydroxy-(5Z,8Z,11Z)-eicosatrienoate + oxidized [NADPH--hemoprotein reductase] + H2O + H(+). The catalysed reaction is (5Z,8Z,11Z,14Z,17Z)-eicosapentaenoate + reduced [NADPH--hemoprotein reductase] + O2 = 19-hydroxy-(5Z,8Z,11Z,14Z,17Z)-eicosapentaenoate + oxidized [NADPH--hemoprotein reductase] + H2O + H(+). The enzyme catalyses (4Z,7Z,10Z,13Z,16Z,19Z)-docosahexaenoate + reduced [NADPH--hemoprotein reductase] + O2 = 21-hydroxy-(4Z,7Z,10Z,13Z,16Z,19Z)-docosahexaenoate + oxidized [NADPH--hemoprotein reductase] + H2O + H(+). It catalyses the reaction dodecanoate + reduced [NADPH--hemoprotein reductase] + O2 = 11-hydroxydodecanoate + oxidized [NADPH--hemoprotein reductase] + H2O + H(+). It carries out the reaction tetradecanoate + reduced [NADPH--hemoprotein reductase] + O2 = 13-hydroxytetradecanoate + oxidized [NADPH--hemoprotein reductase] + H2O + H(+). The catalysed reaction is 4-nitrophenol + NADPH + O2 + H(+) = 4-nitrocatechol + NADP(+) + H2O. It functions in the pathway lipid metabolism; fatty acid metabolism. With respect to regulation, the omega-1 hydroxylase activity is stimulated by cytochrome b5. Its function is as follows. A cytochrome P450 monooxygenase involved in the metabolism of fatty acids. Mechanistically, uses molecular oxygen inserting one oxygen atom into a substrate, and reducing the second into a water molecule, with two electrons provided by NADPH via cytochrome P450 reductase (NADPH--hemoprotein reductase). Catalyzes the hydroxylation of carbon-hydrogen bonds. Hydroxylates fatty acids specifically at the omega-1 position displaying the highest catalytic activity for saturated fatty acids. May be involved in the oxidative metabolism of xenobiotics. The sequence is that of Cytochrome P450 2E1 (CYP2E1) from Mesocricetus auratus (Golden hamster).